A 285-amino-acid polypeptide reads, in one-letter code: Probable endonuclease 4 (285 aa).

Zn(2+) is bound by residues histidine 69, histidine 109, glutamate 145, aspartate 179, histidine 182, histidine 216, aspartate 229, histidine 231, and glutamate 261.

The protein belongs to the AP endonuclease 2 family. It depends on Zn(2+) as a cofactor.

The enzyme catalyses Endonucleolytic cleavage to 5'-phosphooligonucleotide end-products.. Functionally, endonuclease IV plays a role in DNA repair. It cleaves phosphodiester bonds at apurinic or apyrimidinic (AP) sites, generating a 3'-hydroxyl group and a 5'-terminal sugar phosphate. The protein is Probable endonuclease 4 of Yersinia pseudotuberculosis serotype O:1b (strain IP 31758).